The following is a 442-amino-acid chain: Chromosomal replication initiator protein DnaA (442 aa).

The segment at 1 to 84 (MSVLWSHCIS…LEIGSRAAEA (84 aa)) is domain I, interacts with DnaA modulators. The interval 84 to 105 (AAQMRSANPPRKTAPARKQVPN) is domain II. Positions 106–322 (NLNSAFIFGN…GALRRVIANA (217 aa)) are domain III, AAA+ region. ATP-binding residues include glycine 150, glycine 152, lysine 153, and threonine 154. Positions 323-442 (QFTGRPITLE…FSNLLRILSN (120 aa)) are domain IV, binds dsDNA.

Belongs to the DnaA family. As to quaternary structure, oligomerizes as a right-handed, spiral filament on DNA at oriC.

It localises to the cytoplasm. Functionally, plays an essential role in the initiation and regulation of chromosomal replication. ATP-DnaA binds to the origin of replication (oriC) to initiate formation of the DNA replication initiation complex once per cell cycle. Binds the DnaA box (a 9 base pair repeat at the origin) and separates the double-stranded (ds)DNA. Forms a right-handed helical filament on oriC DNA; dsDNA binds to the exterior of the filament while single-stranded (ss)DNA is stabiized in the filament's interior. The ATP-DnaA-oriC complex binds and stabilizes one strand of the AT-rich DNA unwinding element (DUE), permitting loading of DNA polymerase. After initiation quickly degrades to an ADP-DnaA complex that is not apt for DNA replication. Binds acidic phospholipids. The protein is Chromosomal replication initiator protein DnaA of Methylococcus capsulatus (strain ATCC 33009 / NCIMB 11132 / Bath).